The following is a 257-amino-acid chain: Putative hydro-lyase BceJ2315_40370 (257 aa).

This sequence belongs to the D-glutamate cyclase family.

The protein is Putative hydro-lyase BceJ2315_40370 of Burkholderia cenocepacia (strain ATCC BAA-245 / DSM 16553 / LMG 16656 / NCTC 13227 / J2315 / CF5610) (Burkholderia cepacia (strain J2315)).